The chain runs to 135 residues: Small ribosomal subunit protein bS18 (135 aa).

Positions 1-65 (MARPDMGGPK…GDEGGGRRGF (65 aa)) are disordered. The span at 9-41 (PKMGGGFGGPRSGGFGGGGGGGGFGGGGFGGGR) shows a compositional bias: gly residues. The segment covering 42–61 (GGDRGDRGDRDDRGGDEGGG) has biased composition (basic and acidic residues).

This sequence belongs to the bacterial ribosomal protein bS18 family. Part of the 30S ribosomal subunit. Forms a tight heterodimer with protein bS6.

Its function is as follows. Binds as a heterodimer with protein bS6 to the central domain of the 16S rRNA, where it helps stabilize the platform of the 30S subunit. The protein is Small ribosomal subunit protein bS18 of Anaeromyxobacter dehalogenans (strain 2CP-C).